The primary structure comprises 62 residues: UPF0291 protein CLB_2550 (62 aa).

This sequence belongs to the UPF0291 family.

Its subcellular location is the cytoplasm. The chain is UPF0291 protein CLB_2550 from Clostridium botulinum (strain ATCC 19397 / Type A).